Here is a 185-residue protein sequence, read N- to C-terminus: Small ribosomal subunit protein uS7 (185 aa).

This sequence belongs to the universal ribosomal protein uS7 family. In terms of assembly, part of the 30S ribosomal subunit.

Functionally, one of the primary rRNA binding proteins, it binds directly to 16S rRNA where it nucleates assembly of the head domain of the 30S subunit. Is located at the subunit interface close to the decoding center. This Methanothrix thermoacetophila (strain DSM 6194 / JCM 14653 / NBRC 101360 / PT) (Methanosaeta thermophila) protein is Small ribosomal subunit protein uS7.